Here is a 688-residue protein sequence, read N- to C-terminus: Potassium-transporting ATPase ATP-binding subunit (688 aa).

Helical transmembrane passes span Phe37–Ile57, Ile65–Ile85, Ile219–Leu239, and Val262–Ile282. Asp313 serves as the catalytic 4-aspartylphosphate intermediate. ATP-binding positions include Asp350, Glu354, Phe383–Ser390, and Lys401. Residues Asp524 and Asp528 each coordinate Mg(2+). 3 consecutive transmembrane segments (helical) span residues Phe594 to Met614, Ala622 to Leu642, and Ile668 to Val688.

This sequence belongs to the cation transport ATPase (P-type) (TC 3.A.3) family. Type IA subfamily. In terms of assembly, the system is composed of three essential subunits: KdpA, KdpB and KdpC.

Its subcellular location is the cell membrane. The enzyme catalyses K(+)(out) + ATP + H2O = K(+)(in) + ADP + phosphate + H(+). Functionally, part of the high-affinity ATP-driven potassium transport (or Kdp) system, which catalyzes the hydrolysis of ATP coupled with the electrogenic transport of potassium into the cytoplasm. This subunit is responsible for energy coupling to the transport system and for the release of the potassium ions to the cytoplasm. The polypeptide is Potassium-transporting ATPase ATP-binding subunit (Clostridium botulinum (strain Eklund 17B / Type B)).